Here is a 207-residue protein sequence, read N- to C-terminus: MYDYIRGTLTYVHTGAIVIECQGIGYHIAITERWAIECIRALHQDFLVFTHVIFRETEHLLYGFHSREERECFRILISFSGIGPKLALAILNALPLKVLCSVVRSEDIRALASVSGIGKKTAEKLMVELKQKLPDLLPLDSRVETSQTHTTSSCLEEGIQALAALGYSKIAAERMIAEAIKDLPEGSSLTDILPIALKKNFSGVNKD.

The domain I stretch occupies residues 1 to 65 (MYDYIRGTLT…ETEHLLYGFH (65 aa)). Residues 66 to 144 (SREERECFRI…DLLPLDSRVE (79 aa)) form a domain II region. Positions 145–150 (TSQTHT) are flexible linker. The domain III stretch occupies residues 150 to 207 (TTSSCLEEGIQALAALGYSKIAAERMIAEAIKDLPEGSSLTDILPIALKKNFSGVNKD).

The protein belongs to the RuvA family. Homotetramer. Forms an RuvA(8)-RuvB(12)-Holliday junction (HJ) complex. HJ DNA is sandwiched between 2 RuvA tetramers; dsDNA enters through RuvA and exits via RuvB. An RuvB hexamer assembles on each DNA strand where it exits the tetramer. Each RuvB hexamer is contacted by two RuvA subunits (via domain III) on 2 adjacent RuvB subunits; this complex drives branch migration. In the full resolvosome a probable DNA-RuvA(4)-RuvB(12)-RuvC(2) complex forms which resolves the HJ.

The protein resides in the cytoplasm. Functionally, the RuvA-RuvB-RuvC complex processes Holliday junction (HJ) DNA during genetic recombination and DNA repair, while the RuvA-RuvB complex plays an important role in the rescue of blocked DNA replication forks via replication fork reversal (RFR). RuvA specifically binds to HJ cruciform DNA, conferring on it an open structure. The RuvB hexamer acts as an ATP-dependent pump, pulling dsDNA into and through the RuvAB complex. HJ branch migration allows RuvC to scan DNA until it finds its consensus sequence, where it cleaves and resolves the cruciform DNA. The protein is Holliday junction branch migration complex subunit RuvA of Chlamydia pneumoniae (Chlamydophila pneumoniae).